The chain runs to 494 residues: MSNYFDTLNLREQLDQLGRCRFMDREEFSTEADYLKGKRVVIVGCGAQGLNQGLNMRDSGLNVAYALRQAAIDEQRQSFKNASENGFEVASYEKLIPQADLVINLTPDKQHTNVVETVMPLMKEGATLGYSHGFNIVEEGMKIRKDLTVVMVAPKCPGTEVREEYKRGFGVPTLIAVHPENDPKGEGWDIAKAWAAGTGGHRAGCLESSFVAEVKSDLMGEQTILCGMLQAGSIVCYEKMIADGIDASYAGKLLQFGWETVTEALKFGGVTHMMDRLSNPAKIKAFDLSEELKDLMRPLYNKHMDDIISGHFSSTMMADWANDDVNLLGWREETGETAFENYPDSSLEIPEQEYFDNGILMVAMVRAGVELAFEAMTASGIVDESAYYESLHELPLIANTVARKRLYEMNVVISDTAEYGNYLFANVATPLLREKFMPLVDTDVIGRGLGAISNQVDNAKLIEVNETIRNHPVEYIGEELRGYMTDMKTIAVGG.

The KARI N-terminal Rossmann domain occupies 14-208 (LDQLGRCRFM…GGHRAGCLES (195 aa)). Residues 45 to 48 (CGAQ), R68, R76, S78, and 108 to 110 (DKQ) each bind NADP(+). H132 is a catalytic residue. Residue G158 coordinates NADP(+). KARI C-terminal knotted domains lie at 209 to 344 (SFVA…NYPD) and 345 to 487 (SSLE…MTDM). The Mg(2+) site is built by D217, E221, E389, and E393. Position 414 (S414) interacts with substrate.

The protein belongs to the ketol-acid reductoisomerase family. The cofactor is Mg(2+).

The enzyme catalyses (2R)-2,3-dihydroxy-3-methylbutanoate + NADP(+) = (2S)-2-acetolactate + NADPH + H(+). It carries out the reaction (2R,3R)-2,3-dihydroxy-3-methylpentanoate + NADP(+) = (S)-2-ethyl-2-hydroxy-3-oxobutanoate + NADPH + H(+). It participates in amino-acid biosynthesis; L-isoleucine biosynthesis; L-isoleucine from 2-oxobutanoate: step 2/4. It functions in the pathway amino-acid biosynthesis; L-valine biosynthesis; L-valine from pyruvate: step 2/4. Its function is as follows. Involved in the biosynthesis of branched-chain amino acids (BCAA). Catalyzes an alkyl-migration followed by a ketol-acid reduction of (S)-2-acetolactate (S2AL) to yield (R)-2,3-dihydroxy-isovalerate. In the isomerase reaction, S2AL is rearranged via a Mg-dependent methyl migration to produce 3-hydroxy-3-methyl-2-ketobutyrate (HMKB). In the reductase reaction, this 2-ketoacid undergoes a metal-dependent reduction by NADPH to yield (R)-2,3-dihydroxy-isovalerate. The sequence is that of Ketol-acid reductoisomerase (NADP(+)) from Aliivibrio salmonicida (strain LFI1238) (Vibrio salmonicida (strain LFI1238)).